A 542-amino-acid polypeptide reads, in one-letter code: CTP synthase (542 aa).

The segment at 1 to 265 (MARYVFITGG…DSEVLAAFGI (265 aa)) is amidoligase domain. A CTP-binding site is contributed by Ser-13. Ser-13 provides a ligand contact to UTP. ATP contacts are provided by residues 14–19 (SLGKGI) and Asp-71. Mg(2+)-binding residues include Asp-71 and Glu-139. CTP-binding positions include 146 to 148 (DIE), 186 to 191 (KTKPTQ), and Lys-222. UTP contacts are provided by residues 186–191 (KTKPTQ) and Lys-222. The Glutamine amidotransferase type-1 domain maps to 291–541 (TIAIVGKYTG…VEAAVEQSRL (251 aa)). Gly-353 lines the L-glutamine pocket. The active-site Nucleophile; for glutamine hydrolysis is Cys-380. L-glutamine-binding positions include 381-384 (FGMQ), Glu-404, and Arg-469. Catalysis depends on residues His-514 and Glu-516.

Belongs to the CTP synthase family. As to quaternary structure, homotetramer.

It catalyses the reaction UTP + L-glutamine + ATP + H2O = CTP + L-glutamate + ADP + phosphate + 2 H(+). The enzyme catalyses L-glutamine + H2O = L-glutamate + NH4(+). The catalysed reaction is UTP + NH4(+) + ATP = CTP + ADP + phosphate + 2 H(+). It functions in the pathway pyrimidine metabolism; CTP biosynthesis via de novo pathway; CTP from UDP: step 2/2. Its activity is regulated as follows. Allosterically activated by GTP, when glutamine is the substrate; GTP has no effect on the reaction when ammonia is the substrate. The allosteric effector GTP functions by stabilizing the protein conformation that binds the tetrahedral intermediate(s) formed during glutamine hydrolysis. Inhibited by the product CTP, via allosteric rather than competitive inhibition. In terms of biological role, catalyzes the ATP-dependent amination of UTP to CTP with either L-glutamine or ammonia as the source of nitrogen. Regulates intracellular CTP levels through interactions with the four ribonucleotide triphosphates. This Agrobacterium fabrum (strain C58 / ATCC 33970) (Agrobacterium tumefaciens (strain C58)) protein is CTP synthase.